Here is an 83-residue protein sequence, read N- to C-terminus: High-potential iron-sulfur protein (83 aa).

Residues Cys43, Cys46, Cys61, and Cys75 each contribute to the [4Fe-4S] cluster site.

The protein belongs to the high-potential iron-sulfur protein (HiPIP) family. Homodimer.

Its subcellular location is the periplasm. Functionally, specific class of high-redox-potential 4Fe-4S ferredoxins. Functions in anaerobic electron transport in most purple and in some other photosynthetic bacteria and in at least one genus (Paracoccus) of halophilic, denitrifying bacteria. This is High-potential iron-sulfur protein (hip) from Marichromatium gracile (Chromatium gracile).